Reading from the N-terminus, the 503-residue chain is 2,3-bisphosphoglycerate-independent phosphoglycerate mutase (503 aa).

2 residues coordinate Mn(2+): aspartate 10 and serine 60. Serine 60 serves as the catalytic Phosphoserine intermediate. Substrate-binding positions include histidine 121, 150–151 (RD), arginine 181, arginine 187, 256–259 (RPDR), and lysine 330. Aspartate 396, histidine 400, aspartate 437, histidine 438, and histidine 455 together coordinate Mn(2+).

The protein belongs to the BPG-independent phosphoglycerate mutase family. In terms of assembly, monomer. Mn(2+) serves as cofactor.

The enzyme catalyses (2R)-2-phosphoglycerate = (2R)-3-phosphoglycerate. It participates in carbohydrate degradation; glycolysis; pyruvate from D-glyceraldehyde 3-phosphate: step 3/5. In terms of biological role, catalyzes the interconversion of 2-phosphoglycerate and 3-phosphoglycerate. The polypeptide is 2,3-bisphosphoglycerate-independent phosphoglycerate mutase (Mycoplasmoides gallisepticum (strain R(low / passage 15 / clone 2)) (Mycoplasma gallisepticum)).